The following is a 29-amino-acid chain: Cytochrome b6-f complex subunit 8 (29 aa).

Residues 3-23 (IVNIAWAALMVVSTFSLTLVV) form a helical membrane-spanning segment.

This sequence belongs to the PetN family. In terms of assembly, the 4 large subunits of the cytochrome b6-f complex are cytochrome b6, subunit IV (17 kDa polypeptide, PetD), cytochrome f and the Rieske protein, while the 4 small subunits are PetG, PetL, PetM and PetN. The complex functions as a dimer.

Its subcellular location is the plastid. The protein resides in the chloroplast thylakoid membrane. Component of the cytochrome b6-f complex, which mediates electron transfer between photosystem II (PSII) and photosystem I (PSI), cyclic electron flow around PSI, and state transitions. This is Cytochrome b6-f complex subunit 8 from Huperzia lucidula (Shining clubmoss).